The primary structure comprises 301 residues: UDP-3-O-acyl-N-acetylglucosamine deacetylase (301 aa).

The Zn(2+) site is built by His-81, His-237, and Asp-241. The active-site Proton donor is His-264.

This sequence belongs to the LpxC family. Requires Zn(2+) as cofactor.

The catalysed reaction is a UDP-3-O-[(3R)-3-hydroxyacyl]-N-acetyl-alpha-D-glucosamine + H2O = a UDP-3-O-[(3R)-3-hydroxyacyl]-alpha-D-glucosamine + acetate. Its pathway is glycolipid biosynthesis; lipid IV(A) biosynthesis; lipid IV(A) from (3R)-3-hydroxytetradecanoyl-[acyl-carrier-protein] and UDP-N-acetyl-alpha-D-glucosamine: step 2/6. Functionally, catalyzes the hydrolysis of UDP-3-O-myristoyl-N-acetylglucosamine to form UDP-3-O-myristoylglucosamine and acetate, the committed step in lipid A biosynthesis. In Leptospira borgpetersenii serovar Hardjo-bovis (strain JB197), this protein is UDP-3-O-acyl-N-acetylglucosamine deacetylase.